The chain runs to 758 residues: 5-methyltetrahydropteroyltriglutamate--homocysteine methyltransferase (758 aa).

5-methyltetrahydropteroyltri-L-glutamate is bound by residues 17–20 (RELK) and K110. Residues 428 to 430 (IGS) and E481 contribute to the L-homocysteine site. Residues 428 to 430 (IGS) and E481 each bind L-methionine. 5-methyltetrahydropteroyltri-L-glutamate contacts are provided by residues 512-513 (RC) and W558. D596 is a binding site for L-homocysteine. D596 is an L-methionine binding site. E602 contributes to the 5-methyltetrahydropteroyltri-L-glutamate binding site. Zn(2+) contacts are provided by H638, C640, and E662. The Proton donor role is filled by H691. C723 contributes to the Zn(2+) binding site.

Belongs to the vitamin-B12 independent methionine synthase family. Requires Zn(2+) as cofactor.

The enzyme catalyses 5-methyltetrahydropteroyltri-L-glutamate + L-homocysteine = tetrahydropteroyltri-L-glutamate + L-methionine. It participates in amino-acid biosynthesis; L-methionine biosynthesis via de novo pathway; L-methionine from L-homocysteine (MetE route): step 1/1. Its function is as follows. Catalyzes the transfer of a methyl group from 5-methyltetrahydrofolate to homocysteine resulting in methionine formation. In Thermosynechococcus vestitus (strain NIES-2133 / IAM M-273 / BP-1), this protein is 5-methyltetrahydropteroyltriglutamate--homocysteine methyltransferase.